The sequence spans 403 residues: 26S proteasome regulatory subunit 8 homolog (403 aa).

An ATP-binding site is contributed by 186-193 (GPPGTGKT).

This sequence belongs to the AAA ATPase family.

It is found in the cytoplasm. Its subcellular location is the nucleus. In terms of biological role, the 26S proteasome is involved in the ATP-dependent degradation of ubiquitinated proteins. The regulatory (or ATPase) complex confers ATP dependency and substrate specificity to the 26S complex. This chain is 26S proteasome regulatory subunit 8 homolog (let1), found in Schizosaccharomyces pombe (strain 972 / ATCC 24843) (Fission yeast).